A 67-amino-acid polypeptide reads, in one-letter code: Large ribosomal subunit protein bL32 (67 aa).

Positions 1-19 (MAVPKRKMSRSNTRSRRSQ) are enriched in basic residues. The tract at residues 1–22 (MAVPKRKMSRSNTRSRRSQWKA) is disordered.

Belongs to the bacterial ribosomal protein bL32 family.

In Kineococcus radiotolerans (strain ATCC BAA-149 / DSM 14245 / SRS30216), this protein is Large ribosomal subunit protein bL32.